Consider the following 428-residue polypeptide: MFAWYKAGSPQQKKTFWACYSGWALDSFDMQMFSFLLPALTLTWGLTKAEVGVLGTVALVVTAIGGWGAGILSDRYGRARILVLAIIWFTLFGVLAGFAQSYQQLLIARTLQGLGFGGEWAVGAALMAEVIDSRHRGKAIGFVQSGFALGWALAVVVATLLLAWLPKEMAWRVAFWSGIIPALIVLFIRRHVKDSSMFERARQSRAPRASLSSVFNRKYARTLALSSVLVIGLQAGCYAILVWLPSLLNQRQVAAGSMIVTVFIMAFGSFCGFAVTADLSDRIGRRPTLILLSVCAWIVTVSYMLLPLNTTLTAILGFLVGFSAIGMFAALGPFLSELFPTNVRTTCMGFAYNVGKSIGAGSVVGVGVLSTHIGLANAMGTFCLVAYAFAVFGIMLLPETRGIAIENIGEADAHSPAAPLAQPASARS.

Topologically, residues Met-1 to Asp-26 are cytoplasmic. Residues Ser-27 to Thr-47 traverse the membrane as a helical segment. Topologically, residues Lys-48–Glu-50 are periplasmic. The chain crosses the membrane as a helical span at residues Val-51–Ile-71. Over Leu-72 to Arg-80 the chain is Cytoplasmic. The helical transmembrane segment at Ile-81 to Ser-101 threads the bilayer. Topologically, residues Tyr-102–Thr-110 are periplasmic. A helical membrane pass occupies residues Leu-111–Ile-131. The Cytoplasmic portion of the chain corresponds to Asp-132–Ser-145. A helical transmembrane segment spans residues Gly-146–Pro-166. Lys-167 is a topological domain (periplasmic). The helical transmembrane segment at Glu-168–Ile-188 threads the bilayer. The Cytoplasmic segment spans residues Arg-189–Ser-227. The helical transmembrane segment at Val-228–Leu-248 threads the bilayer. Residues Asn-249 to Gln-252 are Periplasmic-facing. A helical membrane pass occupies residues Val-253 to Phe-273. The Cytoplasmic portion of the chain corresponds to Ala-274–Pro-287. Residues Thr-288–Leu-308 traverse the membrane as a helical segment. The Periplasmic segment spans residues Asn-309–Ala-314. A helical transmembrane segment spans residues Ile-315–Leu-335. Over Ser-336–Lys-356 the chain is Cytoplasmic. A helical transmembrane segment spans residues Ser-357–Thr-371. Residues His-372–Asn-377 lie on the Periplasmic side of the membrane. Residues Ala-378–Pro-398 traverse the membrane as a helical segment. The Cytoplasmic portion of the chain corresponds to Glu-399–Ser-428.

The protein belongs to the major facilitator superfamily. Sugar transporter (TC 2.A.1.1) family.

It is found in the cell inner membrane. Probable uptake of 4-methylmuconolactone. The protein is Probable 4-methylmuconolactone transporter of Cupriavidus pinatubonensis (strain JMP 134 / LMG 1197) (Cupriavidus necator (strain JMP 134)).